Reading from the N-terminus, the 88-residue chain is Snakin-1 (88 aa).

The N-terminal stretch at M1–A25 is a signal peptide.

Belongs to the GASA family. Post-translationally, six disulfide bonds may be present. As to expression, expressed in tubers, stems, axillary and young floral buds, sepals, petals, stamens and carpels, but not in roots, stolons, shoot apex meristem or young leaves.

It localises to the secreted. The protein resides in the cell wall. Its function is as follows. Has an antimicrobial activity. Causes a rapid aggregation of both Gram-positive and Gram-negative bacteria, but the antimicrobial activity is not correlated with the capacity to aggregate bacteria. This is Snakin-1 (SN1) from Solanum tuberosum (Potato).